The sequence spans 604 residues: Numb-like protein (604 aa).

Disordered stretches follow at residues 1–68 (MSRS…QWQA), 223–283 (GSFR…PVAA), 372–457 (ASAG…TLQP), and 531–604 (KAGA…EIEL). The region spanning 74–225 (RKGTCSFPVR…RTSFAREGSF (152 aa)) is the PID domain. A phosphoserine mark is found at Ser-224 and Ser-228. Basic and acidic residues predominate over residues 233–245 (PAEREAGDKKKAE). The segment covering 246 to 260 (AAAAPAVAPGPAQPG) has biased composition (low complexity). Residue Ser-263 is modified to Phosphoserine. Thr-279 is subject to Phosphothreonine. Over residues 409–418 (TPSEAERWLE) the composition is skewed to basic and acidic residues. At Ser-411 the chain carries Phosphoserine. Low complexity-rich tracts occupy residues 427-441 (QQQQ…QQQQ) and 542-552 (SAPGGQARPRP). A compositionally biased stretch (pro residues) spans 553-568 (NGAPWPPEPAPAPAPE).

As to quaternary structure, interacts (via PTB domain) with MAP3K7IP2 (via C-terminal). Interacts (via C-terminal) with TRAF6 (via TRAF domains). Associates with EPS15 and NOTCH1. In terms of tissue distribution, preferentially expressed in the nervous system. In the developing neocortex, expressed in postmitotic neurons in the cortical plate but not in progenitors within the ventricular zone.

The protein localises to the cytoplasm. Plays a role in the process of neurogenesis. Required throughout embryonic neurogenesis to maintain neural progenitor cells, also called radial glial cells (RGCs), by allowing their daughter cells to choose progenitor over neuronal cell fate. Not required for the proliferation of neural progenitor cells before the onset of embryonic neurogenesis. Also required postnatally in the subventricular zone (SVZ) neurogenesis by regulating SVZ neuroblasts survival and ependymal wall integrity. Negative regulator of NF-kappa-B signaling pathway. The inhibition of NF-kappa-B activation is mediated at least in part, by preventing MAP3K7IP2 to interact with polyubiquitin chains of TRAF6 and RIPK1 and by stimulating the 'Lys-48'-linked polyubiquitination and degradation of TRAF6 in cortical neurons. The polypeptide is Numb-like protein (Numbl) (Mus musculus (Mouse)).